The following is a 334-amino-acid chain: Nucleoid-associated protein PMI0825 (334 aa).

Belongs to the YejK family.

It localises to the cytoplasm. The protein resides in the nucleoid. This chain is Nucleoid-associated protein PMI0825, found in Proteus mirabilis (strain HI4320).